We begin with the raw amino-acid sequence, 286 residues long: Homoserine kinase (286 aa).

Position 78 to 88 (P78 to S88) interacts with ATP.

This sequence belongs to the GHMP kinase family. Homoserine kinase subfamily.

It localises to the cytoplasm. The catalysed reaction is L-homoserine + ATP = O-phospho-L-homoserine + ADP + H(+). Its pathway is amino-acid biosynthesis; L-threonine biosynthesis; L-threonine from L-aspartate: step 4/5. Its function is as follows. Catalyzes the ATP-dependent phosphorylation of L-homoserine to L-homoserine phosphate. This chain is Homoserine kinase, found in Streptococcus equi subsp. equi (strain 4047).